Consider the following 95-residue polypeptide: Acylphosphatase (95 aa).

Residues 9 to 95 (RLTAWVHGRV…KGGLTGFVER (87 aa)) form the Acylphosphatase-like domain. Residues arginine 24 and asparagine 42 contribute to the active site.

It belongs to the acylphosphatase family.

The enzyme catalyses an acyl phosphate + H2O = a carboxylate + phosphate + H(+). The polypeptide is Acylphosphatase (acyP) (Saccharopolyspora erythraea (strain ATCC 11635 / DSM 40517 / JCM 4748 / NBRC 13426 / NCIMB 8594 / NRRL 2338)).